A 619-amino-acid polypeptide reads, in one-letter code: MIIVTSGHVDHGKTALLKALTGTSTAHLPEEKKRGMTIDLGYAYLPLENKVLGFIDVPGHEKFLSNMLAGLGGVHYAMLIVAADEGVAVQTKEHLAILRQLQFHEIIVVITKADRTNSAQIESLIQTIKQDYSFLRNANYFVTSAETGQGISELRHYLANLAELADTQKPFRYAIDRVFSVKGAGTVVTGTAFSGTVKVNDEIYLSTGQKIRIKAIHAQNTSSEQGIAGQRLALNLNADLDRTPMKRGDWLLQNEPLPPTDRISVQILAEVPLNESQPVHIYHGASRTTGKLTLLQGKNAAKNDRTLAEIILDSPLFLAFGDKLILRSGDTKTLIAGARVLEINSPKRHKRTEVRLNFLANLALAENASQRIALTLQHNATTARQLMWTEQLTSLQLDKALAERDAVRYQDWCFNPNYVQEKTQQILTALNIYHEQHNDQLGVSKARLYRMATLNQPENLIHHFIDEMLDDGRLQQTRGWIHLPEHKIQFNTEEKSRWTDVLNEFEKANGQAIWVRDMANALAIDESIMRNFMYKAGKLGYLTPIVKDRFFLTETLYAYARLIKQIAEEKGKVSVNEVRDKLNFGRKLTVQLMEYFDRMGFLRRKGNDHILRDKNVFDL.

The tr-type G domain occupies 1-169 (MIIVTSGHVD…NLAELADTQK (169 aa)). The interval 7 to 14 (GHVDHGKT) is G1. 7 to 14 (GHVDHGKT) provides a ligand contact to GTP. Residues 35 to 39 (GMTID) form a G2 region. Residues 56–59 (DVPG) are G3. GTP is bound by residues 56–60 (DVPGH) and 111–114 (TKAD). The interval 111 to 114 (TKAD) is G4. Residues 144 to 146 (SAE) form a G5 region.

This sequence belongs to the TRAFAC class translation factor GTPase superfamily. Classic translation factor GTPase family. SelB subfamily.

The protein resides in the cytoplasm. Translation factor necessary for the incorporation of selenocysteine into proteins. It probably replaces EF-Tu for the insertion of selenocysteine directed by the UGA codon. SelB binds GTP and GDP. The protein is Selenocysteine-specific elongation factor (selB) of Haemophilus influenzae (strain ATCC 51907 / DSM 11121 / KW20 / Rd).